A 426-amino-acid polypeptide reads, in one-letter code: uncharacterized protein (426 aa).

Belongs to the serpin family.

This is an uncharacterized protein from Methanosarcina acetivorans (strain ATCC 35395 / DSM 2834 / JCM 12185 / C2A).